Here is a 528-residue protein sequence, read N- to C-terminus: PH domain-containing protein DDB_G0267786 (528 aa).

The 122-residue stretch at 59-180 (SDVFSGYLVK…WIEIFKTCCR (122 aa)) folds into the PH domain.

This Dictyostelium discoideum (Social amoeba) protein is PH domain-containing protein DDB_G0267786.